The primary structure comprises 63 residues: Small ribosomal subunit protein bS21 (63 aa).

Belongs to the bacterial ribosomal protein bS21 family.

The chain is Small ribosomal subunit protein bS21 from Parabacteroides distasonis (strain ATCC 8503 / DSM 20701 / CIP 104284 / JCM 5825 / NCTC 11152).